Here is a 1374-residue protein sequence, read N- to C-terminus: Serine/threonine-protein kinase LMTK1 (1374 aa).

Residues 32-52 (LAVVAVSFSGLFAVIVLMLAC) traverse the membrane as a helical segment. The region spanning 125-395 (LLYLKEIGRG…PTAEEVHLLL (271 aa)) is the Protein kinase domain. Residues 131–139 (IGRGWFGKV) and Lys-156 each bind ATP. Catalysis depends on Asp-253, which acts as the Proton acceptor. The residue at position 495 (Ser-495) is a Phosphoserine. 5 disordered regions span residues 542–622 (GHDP…LAEG), 667–731 (VGAR…LLGL), 765–1195 (WTET…PAVP), 1245–1302 (QESP…AWDD), and 1320–1374 (AAPA…SKEA). A compositionally biased stretch (low complexity) spans 606–620 (PSRSPSPSAGPLSLA). Over residues 680–690 (SNVSANNNSGS) the composition is skewed to polar residues. Composition is skewed to low complexity over residues 719–731 (PEPGYPGEPLLGL), 801–831 (SPSQEGAPLPSEEASAPDAPDALPDSPTPAT), and 847–856 (SSSSPEVEAP). Residues 865 to 878 (EATSGIFTDTSSDG) are compositionally biased toward polar residues. Residues 900–914 (PDSLDSLDIPSSASD) are compositionally biased toward low complexity. Residues 978–987 (RLSTSLSGLN) show a composition bias toward polar residues. Position 1029 is a phosphoserine (Ser-1029). Positions 1063–1073 (EGSSPEPSTCP) are enriched in polar residues. Over residues 1138–1155 (TPRAPLRLALPGLPAALE) the composition is skewed to low complexity. Over residues 1158–1173 (PEEEEEDSEDSDESDE) the composition is skewed to acidic residues. Residues Ser-1168, Ser-1171, Ser-1184, Ser-1187, and Ser-1262 each carry the phosphoserine modification. Residues 1272–1291 (GSPSAPNRPQQADGSPNGST) are compositionally biased toward polar residues. The segment covering 1321 to 1332 (APAPAAPTPTPA) has biased composition (pro residues). The span at 1337–1352 (FTVSPAPTSRFSITHV) shows a compositional bias: polar residues. A compositionally biased stretch (basic and acidic residues) spans 1353 to 1363 (SDSDAESKRGP). Gly residues predominate over residues 1365–1374 (AGAGGESKEA).

The protein belongs to the protein kinase superfamily. Tyr protein kinase family. In terms of assembly, interacts with CDK5. In terms of processing, autophosphorylated. Phosphorylated by CDK5. In terms of tissue distribution, expressed in brain.

The protein localises to the membrane. Its subcellular location is the cytoplasm. The protein resides in the perinuclear region. The enzyme catalyses L-seryl-[protein] + ATP = O-phospho-L-seryl-[protein] + ADP + H(+). It carries out the reaction L-threonyl-[protein] + ATP = O-phospho-L-threonyl-[protein] + ADP + H(+). May be involved in neuronal differentiation. The sequence is that of Serine/threonine-protein kinase LMTK1 (AATK) from Homo sapiens (Human).